The following is a 416-amino-acid chain: Adenylosuccinate synthetase (416 aa).

GTP contacts are provided by residues 13–19 and 41–43; these read GDEGKGK and GHT. Catalysis depends on D14, which acts as the Proton acceptor. Mg(2+) is bound by residues D14 and G41. IMP is bound by residues 14 to 17, 39 to 42, T126, R140, Q220, T235, and R299; these read DEGK and NAGH. H42 (proton donor) is an active-site residue. 295–301 lines the substrate pocket; that stretch reads VSTGRKR. GTP is bound by residues R301, 327–329, and 405–407; these read KLD and STS.

Belongs to the adenylosuccinate synthetase family. In terms of assembly, homodimer. Mg(2+) serves as cofactor.

The protein localises to the cytoplasm. The enzyme catalyses IMP + L-aspartate + GTP = N(6)-(1,2-dicarboxyethyl)-AMP + GDP + phosphate + 2 H(+). It functions in the pathway purine metabolism; AMP biosynthesis via de novo pathway; AMP from IMP: step 1/2. Plays an important role in the de novo pathway of purine nucleotide biosynthesis. Catalyzes the first committed step in the biosynthesis of AMP from IMP. The sequence is that of Adenylosuccinate synthetase from Campylobacter jejuni subsp. jejuni serotype O:2 (strain ATCC 700819 / NCTC 11168).